A 267-amino-acid chain; its full sequence is D-aminoacyl-tRNA deacylase (267 aa).

This sequence belongs to the DtdA deacylase family. Monomer. Requires Zn(2+) as cofactor.

It carries out the reaction a D-aminoacyl-tRNA + H2O = a tRNA + a D-alpha-amino acid + H(+). The catalysed reaction is glycyl-tRNA(Ala) + H2O = tRNA(Ala) + glycine + H(+). D-aminoacyl-tRNA deacylase with broad substrate specificity. By recycling D-aminoacyl-tRNA to D-amino acids and free tRNA molecules, this enzyme counteracts the toxicity associated with the formation of D-aminoacyl-tRNA entities in vivo. This is D-aminoacyl-tRNA deacylase from Methanothrix thermoacetophila (strain DSM 6194 / JCM 14653 / NBRC 101360 / PT) (Methanosaeta thermophila).